Here is a 211-residue protein sequence, read N- to C-terminus: 3,4-dihydroxy-2-butanone 4-phosphate synthase (211 aa).

D-ribulose 5-phosphate is bound by residues 37–38, Asp-42, 150–154, and Glu-174; these read RE and RIGHT. Glu-38 serves as a coordination point for Mg(2+). Residue His-153 participates in Mg(2+) binding.

Belongs to the DHBP synthase family. In terms of assembly, homodimer. Mg(2+) is required as a cofactor. It depends on Mn(2+) as a cofactor.

It catalyses the reaction D-ribulose 5-phosphate = (2S)-2-hydroxy-3-oxobutyl phosphate + formate + H(+). It functions in the pathway cofactor biosynthesis; riboflavin biosynthesis; 2-hydroxy-3-oxobutyl phosphate from D-ribulose 5-phosphate: step 1/1. Its function is as follows. Catalyzes the conversion of D-ribulose 5-phosphate to formate and 3,4-dihydroxy-2-butanone 4-phosphate. The polypeptide is 3,4-dihydroxy-2-butanone 4-phosphate synthase (Buchnera aphidicola subsp. Baizongia pistaciae (strain Bp)).